Consider the following 718-residue polypeptide: Polyribonucleotide nucleotidyltransferase (718 aa).

Mg(2+)-binding residues include D497 and D503. The KH domain maps to 564–623 (PRLLTMRIDPDMIGLVIGPGGKTVKSITEQTKTKIDIDDDGTVTISASEAEQAERAKQLI). The 69-residue stretch at 633–701 (GEVYVGRVTR…NKGRLNLTRL (69 aa)) folds into the S1 motif domain.

It belongs to the polyribonucleotide nucleotidyltransferase family. Mg(2+) is required as a cofactor.

Its subcellular location is the cytoplasm. The enzyme catalyses RNA(n+1) + phosphate = RNA(n) + a ribonucleoside 5'-diphosphate. In terms of biological role, involved in mRNA degradation. Catalyzes the phosphorolysis of single-stranded polyribonucleotides processively in the 3'- to 5'-direction. The sequence is that of Polyribonucleotide nucleotidyltransferase from Gloeothece citriformis (strain PCC 7424) (Cyanothece sp. (strain PCC 7424)).